A 321-amino-acid polypeptide reads, in one-letter code: MSKPIQMEKGVKYRDADKMALIPVKNMPAEQKEVLRKPAWMKIKLPSDSHRIQEIKSAMRKNNLHSVCEEASCPNLAECFNHGTATFMILGAICTRRCPFCDVAHGRPNAPEAEEPKKLAKTIKDMKLKYVVITSVDRDDLRDGGAQHFADCNREIREQNPNIRIETLVPDFRGRMDVALELMKDNPPDVFNHNLETAPRLYRKARPGANYKWSLDLLRKFKEQHPNIPTKSGVMMGLGETKEEIVQVLKDLREHGVTMLTLGQYLAPSRHHLPVERYVPPSEFDELKEIALELGFTHAACGPFVRSSYHADLQAQGMEIK.

7 residues coordinate [4Fe-4S] cluster: Cys-68, Cys-73, Cys-79, Cys-94, Cys-98, Cys-101, and Ser-308. A Radical SAM core domain is found at 80–297 (FNHGTATFMI…KEIALELGFT (218 aa)).

The protein belongs to the radical SAM superfamily. Lipoyl synthase family. [4Fe-4S] cluster serves as cofactor.

The protein resides in the cytoplasm. The enzyme catalyses [[Fe-S] cluster scaffold protein carrying a second [4Fe-4S](2+) cluster] + N(6)-octanoyl-L-lysyl-[protein] + 2 oxidized [2Fe-2S]-[ferredoxin] + 2 S-adenosyl-L-methionine + 4 H(+) = [[Fe-S] cluster scaffold protein] + N(6)-[(R)-dihydrolipoyl]-L-lysyl-[protein] + 4 Fe(3+) + 2 hydrogen sulfide + 2 5'-deoxyadenosine + 2 L-methionine + 2 reduced [2Fe-2S]-[ferredoxin]. It participates in protein modification; protein lipoylation via endogenous pathway; protein N(6)-(lipoyl)lysine from octanoyl-[acyl-carrier-protein]: step 2/2. Functionally, catalyzes the radical-mediated insertion of two sulfur atoms into the C-6 and C-8 positions of the octanoyl moiety bound to the lipoyl domains of lipoate-dependent enzymes, thereby converting the octanoylated domains into lipoylated derivatives. The polypeptide is Lipoyl synthase (Vibrio atlanticus (strain LGP32) (Vibrio splendidus (strain Mel32))).